Here is a 1166-residue protein sequence, read N- to C-terminus: DNA-directed RNA polymerase subunit beta (1166 aa).

This sequence belongs to the RNA polymerase beta chain family. As to quaternary structure, the RNAP catalytic core consists of 2 alpha, 1 beta, 1 beta' and 1 omega subunit. When a sigma factor is associated with the core the holoenzyme is formed, which can initiate transcription.

The catalysed reaction is RNA(n) + a ribonucleoside 5'-triphosphate = RNA(n+1) + diphosphate. Its function is as follows. DNA-dependent RNA polymerase catalyzes the transcription of DNA into RNA using the four ribonucleoside triphosphates as substrates. This Nocardioides sp. (strain ATCC BAA-499 / JS614) protein is DNA-directed RNA polymerase subunit beta.